Consider the following 421-residue polypeptide: Enolase (421 aa).

The active-site Proton donor is the Glu-207. Mg(2+) is bound by residues Asp-244, Glu-285, and Asp-312. Lys-337 acts as the Proton acceptor in catalysis. The (2R)-2-phosphoglycerate site is built by Lys-337, Arg-366, Ser-367, and Lys-388.

The protein belongs to the enolase family. Requires Mg(2+) as cofactor.

It localises to the cytoplasm. The protein resides in the secreted. Its subcellular location is the cell surface. It carries out the reaction (2R)-2-phosphoglycerate = phosphoenolpyruvate + H2O. Its pathway is carbohydrate degradation; glycolysis; pyruvate from D-glyceraldehyde 3-phosphate: step 4/5. Functionally, catalyzes the reversible conversion of 2-phosphoglycerate (2-PG) into phosphoenolpyruvate (PEP). It is essential for the degradation of carbohydrates via glycolysis. In Ehrlichia ruminantium (strain Gardel), this protein is Enolase.